The following is a 609-amino-acid chain: MTTPVSPTSLLPLSAEQLTRLQAATGDFSSTQLAWLSGYFWGLIQQPGNVQPGATIDAATTASAVTVPVQTITLISASQTGNARRVAEQLRDDLLAAKLPVNLVNAGDYKFKQIGQEKLLLIVASTQGEGEPAEEAVALHKFLLSKKAPELKDTAFAVFGLGDTSYEFFSKAGKDFDGRLAELGAERLLDRVDADVDYQALAAQWRRQLVDILQARVPVQGNAVAQLAAQGALDEITSSPYSKSSPLQATFAVNQKVTGRGSEKDVRHIEIDLGDSGLRYQPGDALGVWFDNDPALVQELLELLWLKGDESVSVDGKALPLSQALKSHFELTQNTAPIVEKYAALSRNETLLSLLADKPALQQFAQRTPLVDMVRQAPVELTAEQLLGLLRPLTPRLYSIASSQAEAESEVHITVGVVRYEYEGRARAGGASSYLADRLSEDDEIRVFIEHNDNFRLPANSETPVIMIGPGTGIAPFRAFMQQRDADGAEGKNWLFFGNPHFTEDFLYQVEWQRYVKEGLLTHIDLAWSRDQAHKIYVQDKLREKGAEVWRWIQDGAHLYVCGDANRMAKDVERALLDVIVEHGGMDSEQADEFLSDLRLERRYQRDVY.

The 139-residue stretch at 72–210 folds into the Flavodoxin-like domain; it reads ITLISASQTG…LAAQWRRQLV (139 aa). FMN-binding positions include 78 to 83 and 125 to 128; these read SQTGNA and STQG. One can recognise an FAD-binding FR-type domain in the interval 244–458; that stretch reads SSPLQATFAV…IEHNDNFRLP (215 aa). Residues T332, Q366, 396–399, 414–416, Y420, and 429–432 each bind FAD; these read RLYS, TVG, and GGAS. NADP(+) is bound by residues 529–530, 535–539, and D571; these read SR and KIYVQ. Position 609 (Y609) interacts with FAD.

Belongs to the NADPH-dependent sulphite reductase flavoprotein subunit CysJ family. It in the N-terminal section; belongs to the flavodoxin family. This sequence in the C-terminal section; belongs to the flavoprotein pyridine nucleotide cytochrome reductase family. As to quaternary structure, alpha(8)-beta(8). The alpha component is a flavoprotein, the beta component is a hemoprotein. The cofactor is FAD. Requires FMN as cofactor.

The catalysed reaction is hydrogen sulfide + 3 NADP(+) + 3 H2O = sulfite + 3 NADPH + 4 H(+). It functions in the pathway sulfur metabolism; hydrogen sulfide biosynthesis; hydrogen sulfide from sulfite (NADPH route): step 1/1. In terms of biological role, component of the sulfite reductase complex that catalyzes the 6-electron reduction of sulfite to sulfide. This is one of several activities required for the biosynthesis of L-cysteine from sulfate. The flavoprotein component catalyzes the electron flow from NADPH -&gt; FAD -&gt; FMN to the hemoprotein component. The sequence is that of Sulfite reductase [NADPH] flavoprotein alpha-component from Pectobacterium atrosepticum (strain SCRI 1043 / ATCC BAA-672) (Erwinia carotovora subsp. atroseptica).